Here is a 55-residue protein sequence, read N- to C-terminus: Ferredoxin (55 aa).

4Fe-4S ferredoxin-type domains are found at residues 2 to 27 (YFIT…SPGD) and 28 to 55 (SVYV…PQQK). [4Fe-4S] cluster is bound by residues cysteine 8, cysteine 11, cysteine 14, cysteine 18, cysteine 37, cysteine 40, cysteine 43, and cysteine 47.

It depends on [4Fe-4S] cluster as a cofactor.

Its function is as follows. Ferredoxins are iron-sulfur proteins that transfer electrons in a wide variety of metabolic reactions. This is Ferredoxin from Acetivibrio thermocellus (Hungateiclostridium thermocellum).